The following is a 234-amino-acid chain: Proteasome subunit alpha (234 aa).

The protein belongs to the peptidase T1A family. The 20S proteasome core is composed of 14 alpha and 14 beta subunits that assemble into four stacked heptameric rings, resulting in a barrel-shaped structure. The two inner rings, each composed of seven catalytic beta subunits, are sandwiched by two outer rings, each composed of seven alpha subunits. The catalytic chamber with the active sites is on the inside of the barrel. Has a gated structure, the ends of the cylinder being occluded by the N-termini of the alpha-subunits. Is capped at one or both ends by the proteasome regulatory ATPase, PAN.

The protein localises to the cytoplasm. The formation of the proteasomal ATPase PAN-20S proteasome complex, via the docking of the C-termini of PAN into the intersubunit pockets in the alpha-rings, triggers opening of the gate for substrate entry. Interconversion between the open-gate and close-gate conformations leads to a dynamic regulation of the 20S proteasome proteolysis activity. In terms of biological role, component of the proteasome core, a large protease complex with broad specificity involved in protein degradation. In Picrophilus torridus (strain ATCC 700027 / DSM 9790 / JCM 10055 / NBRC 100828 / KAW 2/3), this protein is Proteasome subunit alpha.